The sequence spans 292 residues: Glutamyl-Q tRNA(Asp) synthetase (292 aa).

Residues 11-15 and Glu47 each bind L-glutamate; that span reads RFAPS. Positions 14 to 24 match the 'HIGH' region motif; it reads PSPTGPLHFGS. Residues Cys103, Cys105, Tyr116, and Cys120 each coordinate Zn(2+). L-glutamate is bound by residues Tyr173 and Arg191. The 'KMSKS' region motif lies at 229-233; sequence KLSKQ. Residue Lys232 coordinates ATP.

The protein belongs to the class-I aminoacyl-tRNA synthetase family. GluQ subfamily. The cofactor is Zn(2+).

Functionally, catalyzes the tRNA-independent activation of glutamate in presence of ATP and the subsequent transfer of glutamate onto a tRNA(Asp). Glutamate is transferred on the 2-amino-5-(4,5-dihydroxy-2-cyclopenten-1-yl) moiety of the queuosine in the wobble position of the QUC anticodon. This Acinetobacter baylyi (strain ATCC 33305 / BD413 / ADP1) protein is Glutamyl-Q tRNA(Asp) synthetase.